Reading from the N-terminus, the 556-residue chain is WD repeat-containing protein srw1 (556 aa).

A disordered region spans residues 1–80 (MDEFDGFTRP…NEGDRFIPSR (80 aa)). A compositionally biased stretch (low complexity) spans 12-37 (SSNSSANRNSNNSMNRVENNNSNSDS). The segment covering 43–55 (SRGDAHTRMRQGF) has biased composition (basic and acidic residues). Ser-62 bears the Phosphoserine mark. Positions 69–78 (RTNEGDRFIP) are enriched in basic and acidic residues. Residue Thr-98 is modified to Phosphothreonine. Over residues 126 to 146 (TFNNSPIATPNTTIGVSTPRT) the composition is skewed to polar residues. The tract at residues 126-173 (TFNNSPIATPNTTIGVSTPRTDSGIDDIELTQRTPPSSSHTSSSILQN) is disordered. Positions 159–169 (TPPSSSHTSSS) are enriched in low complexity. At Thr-177 the chain carries Phosphothreonine. Phosphoserine occurs at positions 187 and 214. WD repeat units lie at residues 246–285 (GLAG…VTVM), 289–328 (YPTD…KTRT), 331–368 (GHTE…HYFR), 372–411 (AHRQ…PLYS), 414–456 (NHIA…MLHN), 458–499 (DTGS…RVGT), and 502–541 (GHTD…SKHS).

The protein belongs to the WD repeat CDC20/Fizzy family. Phosphorylated by cdc2-cdc13-CDK complex. This targets srw1 for proteolysis which in turn promotes cdc13 turnover. Dephosphorylated during G1 arrest.

It localises to the nucleus. Its function is as follows. Has a role in cell differentiation and cell cycling by negatively regulating cig2 and cdc12-associated cdc2. Down-regulates the level of cdc13, particularly in a nitrogen deprived environment. Regulator of cell cycle G1 phase progression. Prevents onset of mitosis during the pre-Start G1 period. Required for degradation of cdc13 mitotic cyclin B during G1 arrest but not during mitotic exit. The polypeptide is WD repeat-containing protein srw1 (srw1) (Schizosaccharomyces pombe (strain 972 / ATCC 24843) (Fission yeast)).